The primary structure comprises 245 residues: UDP-2,3-diacylglucosamine hydrolase (245 aa).

The Mn(2+) site is built by D8, H10, D41, N79, and H114. 79 to 80 serves as a coordination point for substrate; sequence NR. Substrate is bound by residues D122, S160, N164, K167, and H195. Mn(2+) contacts are provided by H195 and H197.

This sequence belongs to the LpxH family. Mn(2+) is required as a cofactor.

The protein resides in the cell inner membrane. The catalysed reaction is UDP-2-N,3-O-bis[(3R)-3-hydroxytetradecanoyl]-alpha-D-glucosamine + H2O = 2-N,3-O-bis[(3R)-3-hydroxytetradecanoyl]-alpha-D-glucosaminyl 1-phosphate + UMP + 2 H(+). It functions in the pathway glycolipid biosynthesis; lipid IV(A) biosynthesis; lipid IV(A) from (3R)-3-hydroxytetradecanoyl-[acyl-carrier-protein] and UDP-N-acetyl-alpha-D-glucosamine: step 4/6. Functionally, hydrolyzes the pyrophosphate bond of UDP-2,3-diacylglucosamine to yield 2,3-diacylglucosamine 1-phosphate (lipid X) and UMP by catalyzing the attack of water at the alpha-P atom. Involved in the biosynthesis of lipid A, a phosphorylated glycolipid that anchors the lipopolysaccharide to the outer membrane of the cell. This Photobacterium profundum (strain SS9) protein is UDP-2,3-diacylglucosamine hydrolase.